A 405-amino-acid polypeptide reads, in one-letter code: MAVGLGPLPALHPVPGFELGISSAGIKRPGRKDVVVMRCAEGSSVAGVFTLNAFCAAPVILAKQRVQGTVRYLLTNTGNANAGTGEPGLVAARRTCEKLAQLTGVDASAVLPYSTGVIGEPLPVEKIEGALQAALDDLSVDNWAAAATGIMTTDTLPKGASRQFTHDGVTITVTGISKGAGMIRPNMATMLGYIATDAKVSQSVLQDLIRDGANKSFNRITIDGDTSTNDCCMLIATGQADLPEITEAKGPLFDALKKAVFDVCMDVAQAIVRDGEGATKFVTVEVNGGGNQQECLDVGYAVAHSPLIKTALFASDPNWGRILAAVGRAGVPDLDVSKIDVFLGGVCIASQGCRATTYTEEQGSAVMAEEEITIRIELGRGDCSETIWTTDLSHEYVKINAEYRT.

The substrate site is built by T152, K178, T189, E276, N400, and T405. T189 serves as the catalytic Nucleophile.

Belongs to the ArgJ family. In terms of assembly, heterotetramer of two alpha and two beta chains.

Its subcellular location is the cytoplasm. The enzyme catalyses N(2)-acetyl-L-ornithine + L-glutamate = N-acetyl-L-glutamate + L-ornithine. The catalysed reaction is L-glutamate + acetyl-CoA = N-acetyl-L-glutamate + CoA + H(+). It participates in amino-acid biosynthesis; L-arginine biosynthesis; L-ornithine and N-acetyl-L-glutamate from L-glutamate and N(2)-acetyl-L-ornithine (cyclic): step 1/1. The protein operates within amino-acid biosynthesis; L-arginine biosynthesis; N(2)-acetyl-L-ornithine from L-glutamate: step 1/4. Its function is as follows. Catalyzes two activities which are involved in the cyclic version of arginine biosynthesis: the synthesis of N-acetylglutamate from glutamate and acetyl-CoA as the acetyl donor, and of ornithine by transacetylation between N(2)-acetylornithine and glutamate. The chain is Arginine biosynthesis bifunctional protein ArgJ from Pseudomonas savastanoi pv. phaseolicola (strain 1448A / Race 6) (Pseudomonas syringae pv. phaseolicola (strain 1448A / Race 6)).